Reading from the N-terminus, the 79-residue chain is uncharacterized protein (79 aa).

This is an uncharacterized protein from Acidianus two-tailed virus (ATV).